The following is an 893-amino-acid chain: POU domain protein 2, isoform B (893 aa).

Residues 586 to 668 are disordered; sequence QMKQQQREDP…STPKPTSGLT (83 aa). Residues 602 to 617 are compositionally biased toward low complexity; it reads PLAKSPLRSPSLSPVP. Polar residues predominate over residues 623–646; sequence QQRTPPNSMTANSLGMSSAVMTPN. Low complexity predominate over residues 647–665; sequence TPSMQQQPQLQQSTPKPTS. Positions 681 to 755 constitute a POU-specific domain; the sequence is EETTDLEELE…LLQKWLEDAD (75 aa). The homeobox DNA-binding region spans 786-845; it reads RRKKRTSIETTVRTTLEKAFLMNCKPTSEEISQLSERLNMDKEVIRVWFCNRRQKEKRIN.

It belongs to the POU transcription factor family. Class-2 subfamily. In terms of tissue distribution, initial expression in cellular blastoderm stage, then in ectodermal stripes during germband extension. Broad expression in the neuroectoderm followed by limitation to discrete subsets of CNS cells, and expression in specific PNS neurons and support cells.

It is found in the nucleus. Functionally, DNA-binding regulatory protein implicated in early development. Involved in neuronal cell fate decision. May act as an octamer-dependent activator of transcription. Could also play an early role in specific ectodermal cells, and a subsequent role in the embryonic nervous system. In Drosophila melanogaster (Fruit fly), this protein is POU domain protein 2, isoform B.